The primary structure comprises 137 residues: GEL complex subunit OPTI (137 aa).

Over 1-44 (MSGGRRKEEPPQPQLANGALKVSVWSKVLRSDAAWEDKDEFLDV) the chain is Cytoplasmic. Residues 45–65 (IYWFRQIIAVVLGVIWGVLPL) form a helical membrane-spanning segment. A topological domain (lumenal) is located at residue arginine 66. Residues 67-84 (GFLGIAGFCLINAGVLYL) traverse the membrane as a helical segment. Over 85–103 (YFSNYLQIDEEEYGGTWEL) the chain is Cytoplasmic. A helical transmembrane segment spans residues 104–127 (TKEGFMTSFALFMVCVADSFTTGH). Residues 128–137 (LDHLLHCHPL) lie on the Lumenal side of the membrane.

It belongs to the EMC6 family. In terms of assembly, component of the GET- and EMC-like (GEL) complex, composed of RAB5IF/OPTI and TMCO1. The GEL complex is part of the multi-pass translocon (MPT) complex, composed of three subcomplexes, the GEL complex (composed of RAB5IF/OPTI and TMCO1), the BOS complex (composed of NCLN/Nicalin, NOMO and TMEM147) and the PAT complex (composed of WDR83OS/Asterix and CCDC47). The MPT complex associates with the SEC61 complex. Interacts with NDUFS3, NDUFA4, NDUFV1, NDUFA9 and NDUFS8 of the mitochondrial membrane respiratory chain NADH dehydrogenase (Complex I). Interacts with UQCRC2 of the ubiquinol-cytochrome c reductase complex (Complex III). Interacts with COX5A and COX7C of the cytochrome c oxidase complex (Complex IV). As to expression, expressed in embryonic stem cells and differentiated neuronal cells.

The protein localises to the endoplasmic reticulum membrane. The protein resides in the mitochondrion inner membrane. Its function is as follows. Component of the multi-pass translocon (MPT) complex that mediates insertion of multi-pass membrane proteins into the lipid bilayer of membranes. The MPT complex takes over after the SEC61 complex: following membrane insertion of the first few transmembrane segments of proteins by the SEC61 complex, the MPT complex occludes the lateral gate of the SEC61 complex to promote insertion of subsequent transmembrane regions. Within the MPT complex, the GEL subcomplex may mediate insertion of transmembrane regions into the membrane. In addition to its role in multi-pass membrane insertion, RAB5IF/OPTI also acts as an assembly factor for mitochondrial respiratory complexes. The polypeptide is GEL complex subunit OPTI (Homo sapiens (Human)).